Reading from the N-terminus, the 280-residue chain is uncharacterized protein (280 aa).

The protein belongs to the herpesviridae BDLF2 family.

This is an uncharacterized protein from Saimiri sciureus (Common squirrel monkey).